The primary structure comprises 663 residues: Inner nuclear membrane protein HEH2 (663 aa).

Disordered stretches follow at residues 46–188 (QRLQ…ELPN) and 267–289 (ISETFDNQDEEDTSRLSSKKNIR). Residues 47-62 (RLQSSPEASKVRTSIQ) show a composition bias toward polar residues. Basic and acidic residues predominate over residues 91–123 (KTVKDENVETNKRKREQISTDNEAKMQIQEEKS). Phosphoserine is present on serine 123. Basic residues predominate over residues 124 to 134 (PKKKRKKRSSK). The short motif at 124–137 (PKKKRKKRSSKANK) is the Nuclear localization signal element. Positions 164–183 (EELHKKDSSDDKPRVKELPK) are enriched in basic and acidic residues. The chain crosses the membrane as a helical span at residues 317–337 (LFIWLWNGAIFLSIICPILFG).

In terms of assembly, interacts with SRP1.

The protein localises to the nucleus inner membrane. The sequence is that of Inner nuclear membrane protein HEH2 (HEH2) from Saccharomyces cerevisiae (strain ATCC 204508 / S288c) (Baker's yeast).